Consider the following 858-residue polypeptide: Ubiquitin carboxyl-terminal hydrolase 5 (858 aa).

Ala-2 is subject to N-acetylalanine. A disordered region spans residues 74-96 (RRTRRPKEEDPATGTGDPPRKKP). Lys-113 participates in a covalent cross-link: Glycyl lysine isopeptide (Lys-Gly) (interchain with G-Cter in SUMO). Phosphoserine occurs at positions 149 and 156. The segment at 175 to 283 (QVSKHAFSLK…EHLSHFGIDM (109 aa)) adopts a UBP-type; degenerate zinc-finger fold. A disulfide bridge links Cys-195 with Cys-816. Zn(2+)-binding residues include Cys-199 and Cys-202. A substrate-binding site is contributed by Trp-209. A Zn(2+)-binding site is contributed by Cys-219. 221 to 224 (RRYF) serves as a coordination point for substrate. His-232 provides a ligand contact to Zn(2+). The substrate site is built by Tyr-259, Tyr-261, and Asp-264. Thr-292 is modified (phosphothreonine). The 531-residue stretch at 326–856 (TGIRNLGNSC…LGYIYFYQRV (531 aa)) folds into the USP domain. The active-site Nucleophile is the Cys-335. A Phosphothreonine modification is found at Thr-623. 2 UBA domains span residues 654-695 (MLDE…VMSH) and 722-762 (PPPE…IFSH). Phosphoserine occurs at positions 779, 783, and 785. The active-site Proton acceptor is His-818.

It belongs to the peptidase C19 family. As to quaternary structure, homodimer. Interacts with TRIML1. In terms of processing, ubiquitinated by SMURF1; leading to proteasomal degradation. SUMOylated at Lys-113; SUMOylation affects the interaction with Cav3.2 channels.

The protein localises to the cytoplasm. The protein resides in the stress granule. It is found in the nucleus. The enzyme catalyses Thiol-dependent hydrolysis of ester, thioester, amide, peptide and isopeptide bonds formed by the C-terminal Gly of ubiquitin (a 76-residue protein attached to proteins as an intracellular targeting signal).. Deubiquitinating enzyme that participates in a wide range of cellular processes by specifically cleaving isopeptide bonds between ubiquitin and substrate proteins or ubiquitin itself. Affects thereby important cellular signaling pathways such as NF-kappa-B, Wnt/beta-catenin, and cytokine production by regulating ubiquitin-dependent protein degradation. Participates in the activation of the Wnt signaling pathway by promoting FOXM1 deubiquitination and stabilization that induces the recruitment of beta-catenin to Wnt target gene promoter. Regulates the assembly and disassembly of heat-induced stress granules by mediating the hydrolysis of unanchored ubiquitin chains. Promotes lipopolysaccharide-induced apoptosis and inflammatory response by stabilizing the TXNIP protein. Affects T-cell biology by stabilizing the inhibitory receptor on T-cells PDC1. Acts as a negative regulator of autophagy by regulating ULK1 at both protein and mRNA levels. Acts also as a negative regulator of type I interferon production by simultaneously removing both 'Lys-48'-linked unanchored and 'Lys-63'-linked anchored polyubiquitin chains on the transcription factor IRF3. Modulates the stability of DNA mismatch repair protein MLH1 and counteracts the effect of the ubiquitin ligase UBR4. Upon activation by insulin, it gets phosphorylated through mTORC1-mediated phosphorylation to enhance YTHDF1 stability by removing 'Lys-11'-linked polyubiquitination. May also deubiquitinate other substrates such as the calcium channel CACNA1H. The polypeptide is Ubiquitin carboxyl-terminal hydrolase 5 (USP5) (Homo sapiens (Human)).